The primary structure comprises 211 residues: MGNAWSKSKFAGWSEVRDRMRRSSSDPQQPCAPGVGAVSRELATRGGISSSHTPQNNAALAFLDSHKDEDVGFPVRPQVPLRPMTFKAAFDLSFFLKEKGGLDGLIYSHKRAEILDLWIYHTQGFFPDWQCYTPGPGPRFPLTFGWLFKLVPVSAEEAERLGNTNEDASLLHPACNHGAEDAHGEILKWQFDRSLGLTHIALQKHPELFPK.

The segment at 1–38 is disordered; sequence MGNAWSKSKFAGWSEVRDRMRRSSSDPQQPCAPGVGAV. G2 is lipidated: N-myristoyl glycine; by host. S6 is subject to Phosphoserine; by host. The span at 15–24 shows a compositional bias: basic and acidic residues; that stretch reads EVRDRMRRSS. The interval 67 to 70 is acidic; interacts with host PACS1 and PACS2; stabilizes the interaction of NEF/MHC-I with host AP1M1; necessary for MHC-I internalization; that stretch reads KDED. Residues 74-83 form an SH3-binding; interaction with Src family tyrosine kinases region; it reads PVRPQVPLRP. Residues 77–80 carry the PxxP; stabilizes the interaction of NEF/MHC-I with host AP1M1; necessary for MHC-I internalization motif; it reads PQVP. Residues 113–129 form a mediates dimerization, Nef-PTE1 interaction region; it reads EILDLWIYHTQGFFPDW. The tract at residues 153–186 is binding to ATP6V1H; it reads VSAEEAERLGNTNEDASLLHPACNHGAEDAHGEI. Residues 170-171 carry the Dileucine internalization motif; necessary for CD4 internalization motif; the sequence is LL. The Diacidic; necessary for CD4 internalization signature appears at 180–181; that stretch reads ED.

This sequence belongs to the lentivirus primate group Nef protein family. Monomer; cytosolic form. Homodimer; membrane bound form. Interacts with Nef associated p21-activated kinase (PAK2); this interaction activates PAK2. Associates with the Nef-MHC-I-AP1 complex; this complex is required for MHC-I internalization. Interacts (via C-terminus) with host PI3-kinase. Interacts with host PACS1; this interaction seems to be weak. Interacts with host PACS2. Interacts with host LCK and MAPK3; these interactions inhibit the kinase activity of the latter. Interacts with host ATP6V1H; this interaction may play a role in CD4 endocytosis. Associates with the CD4-Nef-AP2 complex; this complex is required for CD4 internalization. Interacts with host AP2 subunit alpha and AP2 subunit sigma2. Interacts with TCR-zeta chain; this interaction up-regulates the Fas ligand (FasL) surface expression. Interacts with host HCK, LYN, and SRC; these interactions activate the Src family kinases. Interacts with MAP3K5; this interaction inhibits the Fas and TNFR-mediated death signals. Interacts with beta-COP and PTE1. Interacts with human RACK1; this increases Nef phosphorylation by PKC. Interacts with TP53; this interaction decreases the half-life of TP53, protecting the infected cell against p53-mediated apoptosis. The virion-associated Nef proteins are cleaved by the viral protease to release the soluble C-terminal core protein. Nef is probably cleaved concomitantly with viral structural proteins on maturation of virus particles. In terms of processing, myristoylated. Post-translationally, phosphorylated on serine residues, probably by host PKCdelta and theta.

The protein resides in the host cell membrane. It is found in the virion. The protein localises to the secreted. It localises to the host Golgi apparatus membrane. Functionally, factor of infectivity and pathogenicity, required for optimal virus replication. Alters numerous pathways of T-lymphocyte function and down-regulates immunity surface molecules in order to evade host defense and increase viral infectivity. Alters the functionality of other immunity cells, like dendritic cells, monocytes/macrophages and NK cells. In infected CD4(+) T-lymphocytes, down-regulates the surface MHC-I, mature MHC-II, CD4, CD28, CCR5 and CXCR4 molecules. Mediates internalization and degradation of host CD4 through the interaction of with the cytoplasmic tail of CD4, the recruitment of AP-2 (clathrin adapter protein complex 2), internalization through clathrin coated pits, and subsequent transport to endosomes and lysosomes for degradation. Diverts host MHC-I molecules to the trans-Golgi network-associated endosomal compartments by an endocytic pathway to finally target them for degradation. MHC-I down-regulation may involve AP-1 (clathrin adapter protein complex 1) or possibly Src family kinase-ZAP70/Syk-PI3K cascade recruited by PACS2. In consequence infected cells are masked for immune recognition by cytotoxic T-lymphocytes. Decreasing the number of immune receptors also prevents reinfection by more HIV particles (superinfection). Down-regulates host SERINC3 and SERINC5 thereby excluding these proteins from the viral particles. Virion infectivity is drastically higher when SERINC3 or SERINC5 are excluded from the viral envelope, because these host antiviral proteins impair the membrane fusion event necessary for subsequent virion penetration. Its function is as follows. Bypasses host T-cell signaling by inducing a transcriptional program nearly identical to that of anti-CD3 cell activation. Interaction with TCR-zeta chain up-regulates the Fas ligand (FasL). Increasing surface FasL molecules and decreasing surface MHC-I molecules on infected CD4(+) cells send attacking cytotoxic CD8+ T-lymphocytes into apoptosis. In terms of biological role, plays a role in optimizing the host cell environment for viral replication without causing cell death by apoptosis. Protects the infected cells from apoptosis in order to keep them alive until the next virus generation is ready to strike. Inhibits the Fas and TNFR-mediated death signals by blocking MAP3K5/ASK1. Decreases the half-life of TP53, protecting the infected cell against p53-mediated apoptosis. Inhibits the apoptotic signals regulated by the Bcl-2 family proteins through the formation of a Nef/PI3-kinase/PAK2 complex that leads to activation of PAK2 and induces phosphorylation of host BAD. Functionally, extracellular Nef protein targets CD4(+) T-lymphocytes for apoptosis by interacting with CXCR4 surface receptors. This is Protein Nef from Human immunodeficiency virus type 1 group O (isolate MVP5180) (HIV-1).